Here is a 284-residue protein sequence, read N- to C-terminus: Small ribosomal subunit protein uS5y/uS5u/uS5v (284 aa).

The segment covering 1–19 has biased composition (basic and acidic residues); it reads MAERGGESGAERGGDRGDF. The interval 1-51 is disordered; sequence MAERGGESGAERGGDRGDFGRGFGGGRGGGRGRDRGPRGRGRRGGRASEET. Over residues 20-29 the composition is skewed to gly residues; that stretch reads GRGFGGGRGG. The S5 DRBM domain occupies 95 to 158; that stretch reads LKDEVMKIMP…ILAKLSVVPV (64 aa).

The protein belongs to the universal ribosomal protein uS5 family.

The chain is Small ribosomal subunit protein uS5y/uS5u/uS5v (RPS2B) from Arabidopsis thaliana (Mouse-ear cress).